The sequence spans 275 residues: tRNA uridine(34) hydroxylase (275 aa).

The Rhodanese domain occupies 122–218 (SRSDVYTIDT…YFKSTQNKNS (97 aa)). Cys-178 acts as the Cysteine persulfide intermediate in catalysis.

Belongs to the TrhO family.

The catalysed reaction is uridine(34) in tRNA + AH2 + O2 = 5-hydroxyuridine(34) in tRNA + A + H2O. Functionally, catalyzes oxygen-dependent 5-hydroxyuridine (ho5U) modification at position 34 in tRNAs. The polypeptide is tRNA uridine(34) hydroxylase (Ehrlichia chaffeensis (strain ATCC CRL-10679 / Arkansas)).